Reading from the N-terminus, the 466-residue chain is 3-isopropylmalate dehydratase large subunit (466 aa).

[4Fe-4S] cluster contacts are provided by Cys-347, Cys-407, and Cys-410.

It belongs to the aconitase/IPM isomerase family. LeuC type 1 subfamily. As to quaternary structure, heterodimer of LeuC and LeuD. [4Fe-4S] cluster is required as a cofactor.

It catalyses the reaction (2R,3S)-3-isopropylmalate = (2S)-2-isopropylmalate. It participates in amino-acid biosynthesis; L-leucine biosynthesis; L-leucine from 3-methyl-2-oxobutanoate: step 2/4. Functionally, catalyzes the isomerization between 2-isopropylmalate and 3-isopropylmalate, via the formation of 2-isopropylmaleate. The protein is 3-isopropylmalate dehydratase large subunit of Blochmanniella pennsylvanica (strain BPEN).